A 690-amino-acid chain; its full sequence is Protein arginine N-methyltransferase 7 (690 aa).

SAM-dependent MTase PRMT-type domains lie at 5 to 355 and 364 to 690; these read FQDS…FSLW and KEPL…EEEQ.

It belongs to the class I-like SAM-binding methyltransferase superfamily. Protein arginine N-methyltransferase family. PRMT7 subfamily.

Its function is as follows. Essential arginine methyltransferase that can both catalyze the formation of omega-N monomethylarginine (MMA) and symmetrical dimethylarginine (sDMA). Specifically mediates the symmetrical dimethylation of arginine residues in the small nuclear ribonucleoproteins SmD1 and SmD3. The chain is Protein arginine N-methyltransferase 7 (Art7) from Anopheles gambiae (African malaria mosquito).